Here is a 248-residue protein sequence, read N- to C-terminus: Proteasome subunit alpha (248 aa).

Ser-2 bears the N-acetylserine; partial mark.

Belongs to the peptidase T1A family. The 20S proteasome core is composed of 14 alpha and 14 beta subunits that assemble into four stacked heptameric rings, resulting in a barrel-shaped structure. The two inner rings, each composed of seven catalytic beta subunits, are sandwiched by two outer rings, each composed of seven alpha subunits. The catalytic chamber with the active sites is on the inside of the barrel. Has a gated structure, the ends of the cylinder being occluded by the N-termini of the alpha-subunits. Is capped by the proteasome-associated ATPase, ARC.

It localises to the cytoplasm. It functions in the pathway protein degradation; proteasomal Pup-dependent pathway. The formation of the proteasomal ATPase ARC-20S proteasome complex, likely via the docking of the C-termini of ARC into the intersubunit pockets in the alpha-rings, may trigger opening of the gate for substrate entry. Interconversion between the open-gate and close-gate conformations leads to a dynamic regulation of the 20S proteasome proteolysis activity. Its function is as follows. Component of the proteasome core, a large protease complex with broad specificity involved in protein degradation. The sequence is that of Proteasome subunit alpha from Mycobacterium tuberculosis (strain CDC 1551 / Oshkosh).